Consider the following 887-residue polypeptide: Lon protease homolog 2, peroxisomal (887 aa).

Residues 11-256 (LGILAFRNKV…KATELVDRHL (246 aa)) form the Lon N-terminal domain. Residues 72–101 (YPGGGTDSGERNVKSQPGLSDSRKADGKSQ) form a disordered region. An ATP-binding site is contributed by 409–416 (GPPGVGKT). The Lon proteolytic domain maps to 693–878 (VSNPGVSVGL…EVLEQAFEGG (186 aa)). Active-site residues include serine 784 and lysine 827. Positions 885-887 (ARL) match the Microbody targeting signal motif.

This sequence belongs to the peptidase S16 family.

The protein resides in the peroxisome matrix. It carries out the reaction Hydrolysis of proteins in presence of ATP.. Functionally, ATP-dependent serine protease that mediates the selective degradation of misfolded and unassembled polypeptides in the peroxisomal matrix. Necessary for type 2 peroxisome targeting signal (PTS2)-containing protein processing and facilitates peroxisome matrix protein import. This is Lon protease homolog 2, peroxisomal from Spinacia oleracea (Spinach).